A 264-amino-acid polypeptide reads, in one-letter code: Meiotically up-regulated gene 162 protein (264 aa).

7 helical membrane passes run 18–38 (IVIF…WNLK), 54–74 (LWIY…AGSA), 84–104 (VFQV…GYSF), 140–160 (IISI…LLFL), 174–194 (HLSY…IKLI), 199–219 (FVLG…SLIT), and 223–243 (LISY…IWIY).

The protein resides in the endoplasmic reticulum membrane. In terms of biological role, has a role in meiosis. The polypeptide is Meiotically up-regulated gene 162 protein (mug162) (Schizosaccharomyces pombe (strain 972 / ATCC 24843) (Fission yeast)).